The chain runs to 420 residues: Meiotically up-regulated gene 137 protein (420 aa).

Residues 10–232 (NEKPLGDQRA…QNSLTPQKKI (223 aa)) form the BAR domain. The region spanning 279 to 345 (KETVFVKAIY…PVNYCTRIYD (67 aa)) is the SH3 domain. The tract at residues 398 to 420 (SQNVEASSQPIKIRKPLPEIPNK) is disordered.

The protein localises to the cytoplasm. Its subcellular location is the nucleus. Its function is as follows. Has a role in meiosis and sporulation. The polypeptide is Meiotically up-regulated gene 137 protein (mug137) (Schizosaccharomyces pombe (strain 972 / ATCC 24843) (Fission yeast)).